The sequence spans 416 residues: Phosphoglycerate kinase (416 aa).

(2R)-3-phosphoglycerate-binding residues include Val23, Asp24, Phe25, Asn26, Gln38, Arg39, Ser62, His63, Gly65, Arg66, Leu121, Arg122, His169, and Arg170. Gly213 is a binding site for ADP. Residue Gly213 participates in CDP binding. The AMP site is built by Ala214 and Lys215. Ala214 contacts ATP. Ala214 serves as a coordination point for Mg(2+). Asp218 provides a ligand contact to CDP. Residue Asp218 coordinates Mg(2+). Residue Lys219 participates in AMP binding. Residue Lys219 participates in ATP binding. Gly237 contributes to the ADP binding site. Gly237 is a binding site for CDP. Gly238 and Gly312 together coordinate AMP. Residues Gly238 and Gly312 each coordinate ATP. The CDP site is built by Gly337, Ala339, and Phe342. Phe342 lines the ADP pocket. Glu343 provides a ligand contact to AMP. ATP-binding residues include Glu343, Asp374, and Thr375. Position 374 (Asp374) interacts with Mg(2+).

This sequence belongs to the phosphoglycerate kinase family. In terms of assembly, monomer. Requires Mg(2+) as cofactor.

It localises to the cytoplasm. The protein localises to the mitochondrion. It catalyses the reaction (2R)-3-phosphoglycerate + ATP = (2R)-3-phospho-glyceroyl phosphate + ADP. It functions in the pathway carbohydrate degradation; glycolysis; pyruvate from D-glyceraldehyde 3-phosphate: step 2/5. Catalyzes one of the two ATP producing reactions in the glycolytic pathway via the reversible conversion of 1,3-diphosphoglycerate to 3-phosphoglycerate. Both L- and D- forms of purine and pyrimidine nucleotides can be used as substrates, but the activity is much lower on pyrimidines. Negatively regulates the biosynthesis of acetyl-CoA from pyruvate in the mitochondrion. In Funneliformis mosseae (Endomycorrhizal fungus), this protein is Phosphoglycerate kinase (PGK).